The primary structure comprises 366 residues: Cyanide hydratase (366 aa).

In terms of domain architecture, CN hydrolase spans Tyr-6–Leu-285. Glu-46 serves as the catalytic Proton acceptor. Lys-128 is a catalytic residue. Cys-163 serves as the catalytic Nucleophile.

This sequence belongs to the carbon-nitrogen hydrolase superfamily. Nitrilase family. As to quaternary structure, oligomer of dimers, forming left-handed helical fibers.

The enzyme catalyses formamide = hydrogen cyanide + H2O. Catalyzes the hydration of cyanide to formamide. Degradation of cyanide may be important for plant pathogenic fungi in infection of cyanogenic plants. Can also transform some nitriles like 2-cyanopyridine and fumaronitrile. In Pyrenophora teres f. teres (strain 0-1) (Barley net blotch fungus), this protein is Cyanide hydratase.